Reading from the N-terminus, the 186-residue chain is Large ribosomal subunit protein uL5 (186 aa).

It belongs to the universal ribosomal protein uL5 family. In terms of assembly, part of the 50S ribosomal subunit; part of the 5S rRNA/L5/L18/L25 subcomplex. Contacts the 5S rRNA and the P site tRNA. Forms a bridge to the 30S subunit in the 70S ribosome.

Functionally, this is one of the proteins that bind and probably mediate the attachment of the 5S RNA into the large ribosomal subunit, where it forms part of the central protuberance. In the 70S ribosome it contacts protein S13 of the 30S subunit (bridge B1b), connecting the 2 subunits; this bridge is implicated in subunit movement. Contacts the P site tRNA; the 5S rRNA and some of its associated proteins might help stabilize positioning of ribosome-bound tRNAs. In Legionella pneumophila subsp. pneumophila (strain Philadelphia 1 / ATCC 33152 / DSM 7513), this protein is Large ribosomal subunit protein uL5.